The primary structure comprises 353 residues: Photosystem II protein D1 (353 aa).

An N-acetylthreonine modification is found at T2. At T2 the chain carries Phosphothreonine. Helical transmembrane passes span 29–46 (YIGW…TATS), 118–133 (HFLL…EWEL), and 142–156 (WIAV…AAAA). Residue H118 coordinates chlorophyll a. A pheophytin a-binding site is contributed by Y126. Positions 170 and 189 each coordinate [CaMn4O5] cluster. The chain crosses the membrane as a helical span at residues 197–218 (FHMLGVAGVFGGSLFSAMHGSL). H198 is a binding site for chlorophyll a. A quinone-binding positions include H215 and 264–265 (SF). H215 contacts Fe cation. H272 contacts Fe cation. A helical transmembrane segment spans residues 274–288 (FLAAWPVVGIWFTAL). Positions 332, 333, 342, and 344 each coordinate [CaMn4O5] cluster. The propeptide occupies 345 to 353 (AVEAPSTNG).

This sequence belongs to the reaction center PufL/M/PsbA/D family. PSII is composed of 1 copy each of membrane proteins PsbA, PsbB, PsbC, PsbD, PsbE, PsbF, PsbH, PsbI, PsbJ, PsbK, PsbL, PsbM, PsbT, PsbX, PsbY, PsbZ, Psb30/Ycf12, at least 3 peripheral proteins of the oxygen-evolving complex and a large number of cofactors. It forms dimeric complexes. It depends on The D1/D2 heterodimer binds P680, chlorophylls that are the primary electron donor of PSII, and subsequent electron acceptors. It shares a non-heme iron and each subunit binds pheophytin, quinone, additional chlorophylls, carotenoids and lipids. D1 provides most of the ligands for the Mn4-Ca-O5 cluster of the oxygen-evolving complex (OEC). There is also a Cl(-1) ion associated with D1 and D2, which is required for oxygen evolution. The PSII complex binds additional chlorophylls, carotenoids and specific lipids. as a cofactor. Post-translationally, tyr-161 forms a radical intermediate that is referred to as redox-active TyrZ, YZ or Y-Z. C-terminally processed by CTPA; processing is essential to allow assembly of the oxygen-evolving complex and thus photosynthetic growth.

It is found in the plastid. The protein localises to the chloroplast thylakoid membrane. It carries out the reaction 2 a plastoquinone + 4 hnu + 2 H2O = 2 a plastoquinol + O2. Photosystem II (PSII) is a light-driven water:plastoquinone oxidoreductase that uses light energy to abstract electrons from H(2)O, generating O(2) and a proton gradient subsequently used for ATP formation. It consists of a core antenna complex that captures photons, and an electron transfer chain that converts photonic excitation into a charge separation. The D1/D2 (PsbA/PsbD) reaction center heterodimer binds P680, the primary electron donor of PSII as well as several subsequent electron acceptors. The protein is Photosystem II protein D1 of Panax ginseng (Korean ginseng).